Consider the following 221-residue polypeptide: Eukaryotic translation initiation factor 4E-2 (221 aa).

Over residues 1–20 (MADELNKAALEEYKSSSVED) the composition is skewed to basic and acidic residues. The segment at 1-36 (MADELNKAALEEYKSSSVEDRGEEGEIVGESDDTAS) is disordered. The segment covering 21 to 33 (RGEEGEIVGESDD) has biased composition (acidic residues). EIF4G-binding stretches follow at residues 46–49 (HPLE) and 56–92 (FDNP…NNIH). MRNA contacts are provided by residues 64 to 69 (KQAAWG), lysine 96, and 114 to 115 (WE). An intrachain disulfide couples cysteine 119 to cysteine 157. Positions 140 to 149 (YTLLALIGEQ) are EIF4G-binding. Residues 164-169 (RVRQEK) and 209-213 (KKLDR) each bind mRNA.

It belongs to the eukaryotic initiation factor 4E family. EIF4F is a multi-subunit complex, the composition of which varies with external and internal environmental conditions. It is composed of at least EIF4A, EIF4E and EIF4G. EIF4E is also known to interact with other partners. In higher plants two isoforms of EIF4F have been identified, named isoform EIF4F and isoform EIF(iso)4F. Isoform EIF4F has subunits p220 and p26, whereas isoform EIF(iso)4F has subunits p82 and p28. In terms of assembly, (Microbial infection) Interacts with potyvirus viral genome-linked protein (VPg) in the nucleus; mostly potato virus Y (PVY-LYE84) and tobacco etch virus (TEV-HAT) VPg, but not with PVY-LYE90 and pepper mottle virus (PepMoV) VPg; these interactions are possible in susceptible hosts but impaired in resistant plants. In terms of processing, according to the redox status, the Cys-119-Cys-157 disulfide bridge may have a role in regulating protein function by affecting its ability to bind capped mRNA.

The protein resides in the nucleus. The protein localises to the cytoplasm. Functionally, component of the protein complex eIF4F, which is involved in the recognition of the mRNA cap, ATP-dependent unwinding of 5'-terminal secondary structure and recruitment of mRNA to the ribosome. Recognizes and binds the 7-methylguanosine-containing mRNA cap during an early step in the initiation of protein synthesis and facilitates ribosome binding by inducing the unwinding of the mRNAs secondary structures. Key component of recessive resistance to potyviruses. In terms of biological role, (Microbial infection) Susceptibility host factor required for viral infection (e.g. potato virus Y (PVY) and tobacco etch virus (TEV)) by recruiting viral RNAs to the host ribosomal complex via an interaction with viral genome-linked protein (VPg). This chain is Eukaryotic translation initiation factor 4E-2, found in Solanum lycopersicum (Tomato).